A 414-amino-acid chain; its full sequence is Gamma-glutamyl phosphate reductase (414 aa).

It belongs to the gamma-glutamyl phosphate reductase family.

It is found in the cytoplasm. It catalyses the reaction L-glutamate 5-semialdehyde + phosphate + NADP(+) = L-glutamyl 5-phosphate + NADPH + H(+). Its pathway is amino-acid biosynthesis; L-proline biosynthesis; L-glutamate 5-semialdehyde from L-glutamate: step 2/2. Functionally, catalyzes the NADPH-dependent reduction of L-glutamate 5-phosphate into L-glutamate 5-semialdehyde and phosphate. The product spontaneously undergoes cyclization to form 1-pyrroline-5-carboxylate. This chain is Gamma-glutamyl phosphate reductase, found in Kosmotoga olearia (strain ATCC BAA-1733 / DSM 21960 / TBF 19.5.1).